Reading from the N-terminus, the 757-residue chain is Inhibitor of nuclear factor kappa-B kinase subunit beta (757 aa).

In terms of domain architecture, Protein kinase spans 15-300 (WEMKERLGTG…DPQYGPNGCF (286 aa)). Residues 21 to 29 (LGTGGFGNV) and Lys-44 each bind ATP. Asp-145 acts as the Proton acceptor in catalysis. Lys-163 is covalently cross-linked (Glycyl lysine isopeptide (Lys-Gly) (interchain with G-Cter in ubiquitin)). At Ser-177 the chain carries Phosphoserine; by TBK1 and PKC/PRKCZ. Residue Cys-179 is modified to S-nitrosocysteine. Ser-181 is subject to Phosphoserine; by TBK1, PKC/PRKCZ and PDPK1. The residue at position 191 (Pro-191) is a Hydroxyproline. A leucine-zipper region spans residues 458–479 (LLRNNSCLSKMKNAMASTAQQL). The residue at position 670 (Ser-670) is a Phosphoserine; by autocatalysis. Ser-672 carries the post-translational modification Phosphoserine. Residues Ser-675, Ser-682, Ser-689, Ser-692, Ser-697, Ser-705, Ser-733, and Ser-740 each carry the phosphoserine; by autocatalysis modification. Residues 682 to 703 (SHPGHLMSQPSSACDSLPDSDK) form a disordered region. The tract at residues 737–742 (LDWSWL) is NEMO-binding.

It belongs to the protein kinase superfamily. Ser/Thr protein kinase family. I-kappa-B kinase subfamily. Component of the I-kappa-B-kinase (IKK) core complex consisting of CHUK, IKBKB and IKBKG; probably four alpha/CHUK-beta/IKBKB dimers are associated with four gamma/IKBKG subunits. The IKK core complex seems to associate with regulatory or adapter proteins to form a IKK-signalosome holo-complex. The IKK complex associates with TERF2IP/RAP1, leading to promote IKK-mediated phosphorylation of RELA/p65. Part of a complex composed of NCOA2, NCOA3, CHUK/IKKA, IKBKB, IKBKG and CREBBP. Part of a 70-90 kDa complex at least consisting of CHUK/IKKA, IKBKB, NFKBIA, RELA, ELP1 and MAP3K14. Found in a membrane raft complex, at least composed of BCL10, CARD11, DPP4 and IKBKB. Interacts with SQSTM1 through PRKCZ or PRKCI. Forms an NGF-induced complex with IKBKB, PRKCI and TRAF6. May interact with MAVS/IPS1. Interacts with NALP2. Interacts with TICAM1. Interacts with FAF1; the interaction disrupts the IKK complex formation. Interacts with ATM. Part of a ternary complex consisting of TANK, IKBKB and IKBKG. Interacts with NIBP; the interaction is direct. Interacts with ARRB1 and ARRB2. Interacts with TRIM21. Interacts with NLRC5; prevents IKBKB phosphorylation and kinase activity. Interacts with PDPK1. Interacts with EIF2AK2/PKR. The phosphorylated form interacts with PPM1A and PPM1B. Interacts with ZNF268 isoform 2; the interaction is further increased in a TNF-alpha-dependent manner. Interacts with IKBKE. Interacts with ZC3H12A. Interacts with AKAP13. Interacts with LRRC14; disrupts IKBKB-IKBKG interaction preventing I-kappa-B-kinase (IKK) core complex formation and leading to a decrease of IKBKB phosphorylation and NF-kappaB activation. Interacts with SASH1. Interacts with ARFIP2. Interacts with FKBP5. In terms of processing, upon cytokine stimulation, phosphorylated on Ser-177 and Ser-181 by MEKK1 and/or MAP3K14/NIK as well as TBK1 and PRKCZ; which enhances activity. Phosphorylated by MAP3K7/TAK1 in response to NOD1 and NOD2 signaling, promoting activation and phosphorylation of NF-kappa-B inhibitors, leading to NF-kappa-B activation. Once activated, autophosphorylates on the C-terminal serine cluster; which decreases activity and prevents prolonged activation of the inflammatory response. Phosphorylated by the IKK-related kinases TBK1 and IKBKE, which is associated with reduced CHUK/IKKA and IKBKB activity and NF-kappa-B-dependent gene transcription. Dephosphorylated at Ser-177 and Ser-181 by PPM1A and PPM1B. Ubiquitinated. Monoubiquitination involves TRIM21 that leads to inhibition of Tax-induced NF-kappa-B signaling. 'Ser-163' may not serve as a monoubiquitination site. Ubiquitination on 'Ser-163' may modulate phosphorylation on C-terminal serine residues. Post-translationally, hydroxylated by PHD1/EGLN2, loss of hydroxylation under hypoxic conditions results in activation of NF-kappa-B.

It localises to the cytoplasm. It is found in the nucleus. The protein resides in the membrane raft. The catalysed reaction is L-seryl-[I-kappa-B protein] + ATP = O-phospho-L-seryl-[I-kappa-B protein] + ADP + H(+). It carries out the reaction L-seryl-[protein] + ATP = O-phospho-L-seryl-[protein] + ADP + H(+). The enzyme catalyses L-threonyl-[protein] + ATP = O-phospho-L-threonyl-[protein] + ADP + H(+). Functionally, serine kinase that plays an essential role in the NF-kappa-B signaling pathway which is activated by multiple stimuli such as inflammatory cytokines, bacterial or viral products, DNA damages or other cellular stresses. Acts as a part of the canonical IKK complex in the conventional pathway of NF-kappa-B activation. Phosphorylates inhibitors of NF-kappa-B on 2 critical serine residues. These modifications allow polyubiquitination of the inhibitors and subsequent degradation by the proteasome. In turn, free NF-kappa-B is translocated into the nucleus and activates the transcription of hundreds of genes involved in immune response, growth control, or protection against apoptosis. In addition to the NF-kappa-B inhibitors, phosphorylates several other components of the signaling pathway including NEMO/IKBKG, NF-kappa-B subunits RELA and NFKB1, as well as IKK-related kinases TBK1 and IKBKE. IKK-related kinase phosphorylations may prevent the overproduction of inflammatory mediators since they exert a negative regulation on canonical IKKs. Phosphorylates FOXO3, mediating the TNF-dependent inactivation of this pro-apoptotic transcription factor. Also phosphorylates other substrates including NAA10, NCOA3, BCL10 and IRS1. Phosphorylates RIPK1 at 'Ser-25' which represses its kinase activity and consequently prevents TNF-mediated RIPK1-dependent cell death. Phosphorylates the C-terminus of IRF5, stimulating IRF5 homodimerization and translocation into the nucleus. The protein is Inhibitor of nuclear factor kappa-B kinase subunit beta (Ikbkb) of Rattus norvegicus (Rat).